Reading from the N-terminus, the 390-residue chain is GTPase Obg (390 aa).

The Obg domain maps to Met-1 to Leu-159. The OBG-type G domain maps to Ala-160–Asp-333. Residues Gly-166 to Ser-173, Phe-191 to Ile-195, Asp-213 to Gly-216, Asn-283 to Asp-286, and Ala-314 to Val-316 contribute to the GTP site. 2 residues coordinate Mg(2+): Ser-173 and Thr-193.

The protein belongs to the TRAFAC class OBG-HflX-like GTPase superfamily. OBG GTPase family. Monomer. The cofactor is Mg(2+).

The protein localises to the cytoplasm. Functionally, an essential GTPase which binds GTP, GDP and possibly (p)ppGpp with moderate affinity, with high nucleotide exchange rates and a fairly low GTP hydrolysis rate. Plays a role in control of the cell cycle, stress response, ribosome biogenesis and in those bacteria that undergo differentiation, in morphogenesis control. This chain is GTPase Obg, found in Aliivibrio fischeri (strain ATCC 700601 / ES114) (Vibrio fischeri).